The sequence spans 346 residues: NADH-ubiquinone oxidoreductase chain 2 (346 aa).

11 consecutive transmembrane segments (helical) span residues 1-21 (MSPY…MLIS), 26-46 (WVFM…ILVW), 60-80 (FIVQ…SLSG), 96-116 (MMIM…YWVV), 122-142 (LNYI…LAVL), 151-171 (SSML…GGLG), 178-198 (LLAF…VAGS), 199-219 (LLGL…FSIL), 242-262 (VLLG…GFFG), 274-294 (LLLG…FYYL), and 320-340 (LSGL…LVGG).

Belongs to the complex I subunit 2 family.

It localises to the mitochondrion inner membrane. The catalysed reaction is a ubiquinone + NADH + 5 H(+)(in) = a ubiquinol + NAD(+) + 4 H(+)(out). Functionally, core subunit of the mitochondrial membrane respiratory chain NADH dehydrogenase (Complex I) that is believed to belong to the minimal assembly required for catalysis. Complex I functions in the transfer of electrons from NADH to the respiratory chain. The immediate electron acceptor for the enzyme is believed to be ubiquinone. This is NADH-ubiquinone oxidoreductase chain 2 (ND2) from Branchiostoma lanceolatum (Common lancelet).